The chain runs to 211 residues: Large ribosomal subunit protein uL4 (211 aa).

The span at 41–53 shows a compositional bias: polar residues; it reads QAHSRQGTASTLT. Residues 41-78 are disordered; sequence QAHSRQGTASTLTRAEVRGGGRKPYKQKGTGRARQGTI. Basic residues predominate over residues 60–71; sequence GGRKPYKQKGTG.

This sequence belongs to the universal ribosomal protein uL4 family. Part of the 50S ribosomal subunit.

Functionally, one of the primary rRNA binding proteins, this protein initially binds near the 5'-end of the 23S rRNA. It is important during the early stages of 50S assembly. It makes multiple contacts with different domains of the 23S rRNA in the assembled 50S subunit and ribosome. Forms part of the polypeptide exit tunnel. The sequence is that of Large ribosomal subunit protein uL4 from Prochlorococcus marinus (strain MIT 9313).